The sequence spans 502 residues: Na(+)/H(+) antiporter NhaB (502 aa).

A run of 11 helical transmembrane segments spans residues 27–49 (AFLV…VLIL), 66–86 (PGGL…ESVF), 95–115 (VILL…LLLY), 128–148 (IVLS…LDAL), 149–169 (TVTA…HQFA), 241–261 (FFLQ…VTCI), 299–318 (IAAL…SLAL), 350–370 (FEEA…VAVI), 394–414 (MFFI…VATV), 450–470 (ATPN…APLI), and 477–497 (MVLM…IAVY).

Belongs to the NhaB Na(+)/H(+) (TC 2.A.34) antiporter family.

Its subcellular location is the cell inner membrane. It catalyses the reaction 2 Na(+)(in) + 3 H(+)(out) = 2 Na(+)(out) + 3 H(+)(in). Functionally, na(+)/H(+) antiporter that extrudes sodium in exchange for external protons. The sequence is that of Na(+)/H(+) antiporter NhaB from Teredinibacter turnerae (strain ATCC 39867 / T7901).